The chain runs to 213 residues: ATP phosphoribosyltransferase (213 aa).

The protein belongs to the ATP phosphoribosyltransferase family. Short subfamily. Heteromultimer composed of HisG and HisZ subunits.

The protein resides in the cytoplasm. The catalysed reaction is 1-(5-phospho-beta-D-ribosyl)-ATP + diphosphate = 5-phospho-alpha-D-ribose 1-diphosphate + ATP. It functions in the pathway amino-acid biosynthesis; L-histidine biosynthesis; L-histidine from 5-phospho-alpha-D-ribose 1-diphosphate: step 1/9. Its function is as follows. Catalyzes the condensation of ATP and 5-phosphoribose 1-diphosphate to form N'-(5'-phosphoribosyl)-ATP (PR-ATP). Has a crucial role in the pathway because the rate of histidine biosynthesis seems to be controlled primarily by regulation of HisG enzymatic activity. This is ATP phosphoribosyltransferase from Anoxybacillus flavithermus (strain DSM 21510 / WK1).